Consider the following 125-residue polypeptide: Large ribosomal subunit protein eL31 (125 aa).

Methionine 1 is subject to N-acetylmethionine. Serine 15 carries the post-translational modification Phosphoserine. Residues lysine 55 and lysine 70 each carry the N6-succinyllysine modification. Position 75 is an N6-acetyllysine; alternate (lysine 75). N6-succinyllysine; alternate is present on lysine 75. Serine 98 carries the post-translational modification Phosphoserine.

Belongs to the eukaryotic ribosomal protein eL31 family. In terms of assembly, component of the large ribosomal subunit.

Its subcellular location is the cytoplasm. Its function is as follows. Component of the large ribosomal subunit. The ribosome is a large ribonucleoprotein complex responsible for the synthesis of proteins in the cell. The sequence is that of Large ribosomal subunit protein eL31 (RPL31) from Pongo abelii (Sumatran orangutan).